The chain runs to 735 residues: Ion-translocating oxidoreductase complex subunit C (735 aa).

2 4Fe-4S ferredoxin-type domains span residues 368–397 (MGAP…QQLY) and 407–436 (KATA…VQYF). 8 residues coordinate [4Fe-4S] cluster: Cys-377, Cys-380, Cys-383, Cys-387, Cys-416, Cys-419, Cys-422, and Cys-426. Residues 562–713 (AIARAKARKQ…AEPADPRKAA (152 aa)) form a disordered region.

The protein belongs to the 4Fe4S bacterial-type ferredoxin family. RnfC subfamily. As to quaternary structure, the complex is composed of six subunits: RsxA, RsxB, RsxC, RsxD, RsxE and RsxG. It depends on [4Fe-4S] cluster as a cofactor.

The protein localises to the cell inner membrane. Part of a membrane-bound complex that couples electron transfer with translocation of ions across the membrane. Required to maintain the reduced state of SoxR. This is Ion-translocating oxidoreductase complex subunit C from Salmonella newport (strain SL254).